The primary structure comprises 312 residues: Protoheme IX farnesyltransferase (312 aa).

The next 9 helical transmembrane spans lie at 29 to 49 (VMSL…GHMN), 50 to 70 (PVLA…SGAL), 90 to 110 (IPAG…LSAF), 117 to 137 (LMVN…YAVI), 150 to 170 (IVIG…AATG), 177 to 197 (LVLF…LSLF), 223 to 243 (ALFY…MGFA), 246 to 266 (FYGV…WRLW), and 292 to 312 (IFAV…FGVF).

It belongs to the UbiA prenyltransferase family. Protoheme IX farnesyltransferase subfamily.

Its subcellular location is the cell inner membrane. It carries out the reaction heme b + (2E,6E)-farnesyl diphosphate + H2O = Fe(II)-heme o + diphosphate. Its pathway is porphyrin-containing compound metabolism; heme O biosynthesis; heme O from protoheme: step 1/1. In terms of biological role, converts heme B (protoheme IX) to heme O by substitution of the vinyl group on carbon 2 of heme B porphyrin ring with a hydroxyethyl farnesyl side group. The protein is Protoheme IX farnesyltransferase of Brucella melitensis biotype 1 (strain ATCC 23456 / CCUG 17765 / NCTC 10094 / 16M).